The sequence spans 338 residues: Lipoate-protein ligase A (338 aa).

Residues 29–216 enclose the BPL/LPL catalytic domain; that stretch reads SPNQRVLFLW…AFFAYYDEQV (188 aa). Residues R71, 76–79, and K134 each bind ATP; that span reads GAVF. K134 lines the (R)-lipoate pocket.

It belongs to the LplA family. Monomer.

It localises to the cytoplasm. It catalyses the reaction L-lysyl-[lipoyl-carrier protein] + (R)-lipoate + ATP = N(6)-[(R)-lipoyl]-L-lysyl-[lipoyl-carrier protein] + AMP + diphosphate + H(+). Its pathway is protein modification; protein lipoylation via exogenous pathway; protein N(6)-(lipoyl)lysine from lipoate: step 1/2. The protein operates within protein modification; protein lipoylation via exogenous pathway; protein N(6)-(lipoyl)lysine from lipoate: step 2/2. Its function is as follows. Catalyzes both the ATP-dependent activation of exogenously supplied lipoate to lipoyl-AMP and the transfer of the activated lipoyl onto the lipoyl domains of lipoate-dependent enzymes. This is Lipoate-protein ligase A from Yersinia pseudotuberculosis serotype O:1b (strain IP 31758).